Consider the following 442-residue polypeptide: uncharacterized protein (442 aa).

This is an uncharacterized protein from Sputnik virophage.